Consider the following 498-residue polypeptide: ATP synthase subunit beta, chloroplastic (498 aa).

Residue 172 to 179 participates in ATP binding; that stretch reads GGAGVGKT.

The protein belongs to the ATPase alpha/beta chains family. F-type ATPases have 2 components, CF(1) - the catalytic core - and CF(0) - the membrane proton channel. CF(1) has five subunits: alpha(3), beta(3), gamma(1), delta(1), epsilon(1). CF(0) has four main subunits: a(1), b(1), b'(1) and c(9-12).

The protein resides in the plastid. It is found in the chloroplast thylakoid membrane. The enzyme catalyses ATP + H2O + 4 H(+)(in) = ADP + phosphate + 5 H(+)(out). Functionally, produces ATP from ADP in the presence of a proton gradient across the membrane. The catalytic sites are hosted primarily by the beta subunits. This chain is ATP synthase subunit beta, chloroplastic, found in Oryza nivara (Indian wild rice).